A 2419-amino-acid chain; its full sequence is Telomere-associated protein RIF1 (2419 aa).

2 disordered regions span residues 1-24 (MTAP…VPPG) and 373-408 (SIPS…SPRG). Residues 373 to 385 (SIPSPQGNSSRGS) show a composition bias toward polar residues. Phosphoserine occurs at positions 385, 391, 779, 976, and 1005. T1044 is modified (phosphothreonine). Residues 1184 to 1198 (SSSTETSVVSSSSVS) show a composition bias toward low complexity. Disordered stretches follow at residues 1184 to 1594 (SSST…QAVP) and 1613 to 1637 (RVIL…EKSK). 2 stretches are compositionally biased toward polar residues: residues 1199-1217 (NATF…QTFI) and 1228-1255 (RPFS…TNTD). T1215 bears the Phosphothreonine mark. Residues S1231 and S1233 each carry the phosphoserine modification. Over residues 1263 to 1272 (REVTNSKSDS) the composition is skewed to basic and acidic residues. The span at 1289–1302 (AEQSVTKKSKPSLT) shows a compositional bias: polar residues. Positions 1323–1345 (HVSENDDHPSEATLEHKDGDPKP) are enriched in basic and acidic residues. Residues S1407, S1439, S1457, and S1498 each carry the phosphoserine modification. Basic and acidic residues predominate over residues 1416–1455 (SQERESGQQKKERRKEEEKIISKSPLRIKDDKLPTQKLTD). Polar residues predominate over residues 1457 to 1467 (SPIQENLTEKG). T1504 is subject to Phosphothreonine. Residues 1507-1516 (NLDKSSEKPL) are compositionally biased toward basic and acidic residues. Positions 1525-1537 (RRASQGLISAVEN) are enriched in polar residues. S1528, S1538, S1540, S1542, and S1550 each carry phosphoserine. Over residues 1551 to 1560 (RKKRSGKWKN) the composition is skewed to basic residues. Residues S1562 and S1565 each carry the phosphoserine modification. Residues 1572–1581 (EEKKAEEEVM) are compositionally biased toward basic and acidic residues. Phosphoserine occurs at positions 1680 and 1683. A Phosphothreonine modification is found at T1780. Residue S1784 is modified to Phosphoserine. Residues 1812 to 1836 (ASEAVSEIQGPCSENHSPAEDPGLS) form a disordered region. Position 1842 is a phosphoserine (S1842). The tract at residues 1882–2419 (DAFVAADSEK…RWRSPAHENS (538 aa)) is interaction with condensed chromosomes in telophase. Disordered regions lie at residues 1890-1914 (EKST…ECEA) and 1929-1983 (FNSG…AQMS). A phosphoserine mark is found at S1931, S2094, S2109, S2121, S2125, S2144, S2153, S2208, S2287, S2341, S2413, and S2419. The segment at 2119–2394 (VWSPLASPST…TGSQLFEMHE (276 aa)) is interaction with ERCC6. Positions 2182–2212 (SPIIKSVKTSPTSHSKHNTTSAKGFLSPGSQ) are disordered. Positions 2189 to 2212 (KTSPTSHSKHNTTSAKGFLSPGSQ) are enriched in polar residues.

The protein belongs to the RIF1 family. Interacts with TP53BP1 (when phosphorylated by ATM). May interact with TRF2. Interacts with SHLD2. Interacts with ERCC6 (via WHD region). Interacts with ASTE1. Expressed in Sertoli cells, prospermatagonia, early primary spermatocytes, and in oocytes at all stages of their growth. Expressed in embryonic stem (ES) and embryonic germ (EG) cells: expression is lost upon differentiation.

The protein localises to the nucleus. Its subcellular location is the chromosome. It is found in the telomere. The protein resides in the cytoplasm. It localises to the cytoskeleton. The protein localises to the spindle. Functionally, key regulator of TP53BP1 that plays a key role in the repair of double-strand DNA breaks (DSBs) in response to DNA damage: acts by promoting non-homologous end joining (NHEJ)-mediated repair of DSBs. In response to DNA damage, interacts with ATM-phosphorylated TP53BP1. Interaction with TP53BP1 leads to dissociate the interaction between NUDT16L1/TIRR and TP53BP1, thereby unmasking the tandem Tudor-like domain of TP53BP1 and allowing recruitment to DNA DSBs. Once recruited to DSBs, RIF1 and TP53BP1 act by promoting NHEJ-mediated repair of DSBs. In the same time, RIF1 and TP53BP1 specifically counteract the function of BRCA1 by blocking DSBs resection via homologous recombination (HR) during G1 phase. Also required for immunoglobulin class-switch recombination (CSR) during antibody genesis, a process that involves the generation of DNA DSBs. Promotes NHEJ of dysfunctional telomeres. The chain is Telomere-associated protein RIF1 from Mus musculus (Mouse).